A 252-amino-acid chain; its full sequence is Imidazole glycerol phosphate synthase subunit HisF (252 aa).

Catalysis depends on residues D11 and D130.

It belongs to the HisA/HisF family. In terms of assembly, heterodimer of HisH and HisF.

It localises to the cytoplasm. The catalysed reaction is 5-[(5-phospho-1-deoxy-D-ribulos-1-ylimino)methylamino]-1-(5-phospho-beta-D-ribosyl)imidazole-4-carboxamide + L-glutamine = D-erythro-1-(imidazol-4-yl)glycerol 3-phosphate + 5-amino-1-(5-phospho-beta-D-ribosyl)imidazole-4-carboxamide + L-glutamate + H(+). Its pathway is amino-acid biosynthesis; L-histidine biosynthesis; L-histidine from 5-phospho-alpha-D-ribose 1-diphosphate: step 5/9. Functionally, IGPS catalyzes the conversion of PRFAR and glutamine to IGP, AICAR and glutamate. The HisF subunit catalyzes the cyclization activity that produces IGP and AICAR from PRFAR using the ammonia provided by the HisH subunit. This is Imidazole glycerol phosphate synthase subunit HisF from Bacillus mycoides (strain KBAB4) (Bacillus weihenstephanensis).